The chain runs to 615 residues: DNA mismatch repair protein MutL (615 aa).

Over residues proline 378–proline 391 the composition is skewed to low complexity. Positions proline 378 to tyrosine 397 are disordered.

The protein belongs to the DNA mismatch repair MutL/HexB family.

Functionally, this protein is involved in the repair of mismatches in DNA. It is required for dam-dependent methyl-directed DNA mismatch repair. May act as a 'molecular matchmaker', a protein that promotes the formation of a stable complex between two or more DNA-binding proteins in an ATP-dependent manner without itself being part of a final effector complex. This is DNA mismatch repair protein MutL from Escherichia coli O127:H6 (strain E2348/69 / EPEC).